A 256-amino-acid polypeptide reads, in one-letter code: Thiazole synthase (256 aa).

The active-site Schiff-base intermediate with DXP is Lys-95. Residues Gly-156, 182-183 (AG), and 204-205 (NT) each bind 1-deoxy-D-xylulose 5-phosphate.

It belongs to the ThiG family. As to quaternary structure, homotetramer. Forms heterodimers with either ThiH or ThiS.

The protein resides in the cytoplasm. It carries out the reaction [ThiS sulfur-carrier protein]-C-terminal-Gly-aminoethanethioate + 2-iminoacetate + 1-deoxy-D-xylulose 5-phosphate = [ThiS sulfur-carrier protein]-C-terminal Gly-Gly + 2-[(2R,5Z)-2-carboxy-4-methylthiazol-5(2H)-ylidene]ethyl phosphate + 2 H2O + H(+). It functions in the pathway cofactor biosynthesis; thiamine diphosphate biosynthesis. In terms of biological role, catalyzes the rearrangement of 1-deoxy-D-xylulose 5-phosphate (DXP) to produce the thiazole phosphate moiety of thiamine. Sulfur is provided by the thiocarboxylate moiety of the carrier protein ThiS. In vitro, sulfur can be provided by H(2)S. This Escherichia coli O45:K1 (strain S88 / ExPEC) protein is Thiazole synthase.